The chain runs to 31 residues: Photosystem II reaction center protein T (31 aa).

A helical membrane pass occupies residues 3-23; that stretch reads SVAYILVLTMTLAVLFFAIAF.

Belongs to the PsbT family. In terms of assembly, PSII is composed of 1 copy each of membrane proteins PsbA, PsbB, PsbC, PsbD, PsbE, PsbF, PsbH, PsbI, PsbJ, PsbK, PsbL, PsbM, PsbT, PsbX, PsbY, PsbZ, Psb30/Ycf12, peripheral proteins PsbO, CyanoQ (PsbQ), PsbU, PsbV and a large number of cofactors. It forms dimeric complexes.

The protein resides in the cellular thylakoid membrane. Its function is as follows. Found at the monomer-monomer interface of the photosystem II (PS II) dimer, plays a role in assembly and dimerization of PSII. PSII is a light-driven water plastoquinone oxidoreductase, using light energy to abstract electrons from H(2)O, generating a proton gradient subsequently used for ATP formation. This is Photosystem II reaction center protein T from Rippkaea orientalis (strain PCC 8801 / RF-1) (Cyanothece sp. (strain PCC 8801)).